We begin with the raw amino-acid sequence, 183 residues long: Ribosome maturation factor RimM (183 aa).

Residues A105–L181 form the PRC barrel domain.

It belongs to the RimM family. Binds ribosomal protein uS19.

The protein resides in the cytoplasm. Its function is as follows. An accessory protein needed during the final step in the assembly of 30S ribosomal subunit, possibly for assembly of the head region. Essential for efficient processing of 16S rRNA. May be needed both before and after RbfA during the maturation of 16S rRNA. It has affinity for free ribosomal 30S subunits but not for 70S ribosomes. The protein is Ribosome maturation factor RimM of Thermosynechococcus vestitus (strain NIES-2133 / IAM M-273 / BP-1).